The sequence spans 170 residues: uncharacterized protein (170 aa).

A VOC domain is found at 25–151 (PALSPHLVVD…FGHHWSLGQP (127 aa)).

This is an uncharacterized protein from Mycobacterium tuberculosis (strain CDC 1551 / Oshkosh).